A 552-amino-acid chain; its full sequence is Probable inorganic phosphate transporter 1-10 (552 aa).

Residues 1 to 22 (MAPIGVLTALDQARTQYYHFKA) are Cytoplasmic-facing. The helical transmembrane segment at 23 to 43 (IVIAGMGLFTDSYDLFCIAPV) threads the bilayer. The Extracellular segment spans residues 44–68 (MKIVGRVYYSDGGARPGVTPPAVVS). The chain crosses the membrane as a helical span at residues 69 to 89 (ATVGVALLGAVIGNVVFGALG). The Cytoplasmic segment spans residues 90 to 96 (DRVGRRR). The helical transmembrane segment at 97–117 (VYGACLLLMVCSSVGSGFSVC) threads the bilayer. The Extracellular segment spans residues 118–123 (RTRRCA). A helical membrane pass occupies residues 124–144 (LASLCFFRFLLGVGVGGDYPL). The Cytoplasmic portion of the chain corresponds to 145–158 (SATIMSEFANRRTR). Residues 159–179 (GAFIAAVFSMQGFGILASSAV) traverse the membrane as a helical segment. Topologically, residues 180–203 (TMAVAAAFDHYTGYPAPLDTPECA) are extracellular. The helical transmembrane segment at 204 to 224 (DLAWRIILMAGAVPAALTYYW) threads the bilayer. Residues 225–295 (RMSMPETARY…RRFVRQHGRD (71 aa)) are Cytoplasmic-facing. Residues 296-316 (LFACAAAWFLLDIPYYSSTLF) form a helical membrane-spanning segment. Residues 317–342 (QSQIYRPLFPAPGLINAFQEAFNVAK) lie on the Extracellular side of the membrane. Residues 343–363 (FQAVIAVASTIPGYFVAVLLI) traverse the membrane as a helical segment. Over 364-369 (DRVGRR) the chain is Cytoplasmic. A helical membrane pass occupies residues 370–390 (CLQMAGFLLMAVFLFALAGPY). The Extracellular segment spans residues 391–397 (DGYWRDH). The helical transmembrane segment at 398 to 418 (GAHAGYIVLYSLTFFSANLGP) threads the bilayer. The Cytoplasmic segment spans residues 419-439 (NTTTFILPAELFPARFRSTCH). Residues 440–460 (GLSGAAGKLGALVGSIGFLWA) form a helical membrane-spanning segment. Residues 461 to 473 (SQQKDGAAAGHLP) lie on the Extracellular side of the membrane. Residues 474-494 (GIGMMYALFVLGGICLLGLAL) form a helical membrane-spanning segment. At 495 to 552 (TYVFTPETMMRSLEENESDRAQTQVGDGGSDTEAAKSPASMASSHLSMSPILPARVSV) the chain is on the cytoplasmic side. The tract at residues 507–540 (LEENESDRAQTQVGDGGSDTEAAKSPASMASSHL) is disordered.

It belongs to the major facilitator superfamily. Phosphate:H(+) symporter (TC 2.A.1.9) family. As to expression, expressed at low levels in roots.

The protein localises to the membrane. Functionally, high-affinity transporter for external inorganic phosphate. In Oryza sativa subsp. japonica (Rice), this protein is Probable inorganic phosphate transporter 1-10 (PHT1-10).